A 209-amino-acid polypeptide reads, in one-letter code: ATP-dependent Clp protease proteolytic subunit (209 aa).

Residue Ser113 is the Nucleophile of the active site. His138 is a catalytic residue.

The protein belongs to the peptidase S14 family. In terms of assembly, fourteen ClpP subunits assemble into 2 heptameric rings which stack back to back to give a disk-like structure with a central cavity, resembling the structure of eukaryotic proteasomes.

Its subcellular location is the cytoplasm. It catalyses the reaction Hydrolysis of proteins to small peptides in the presence of ATP and magnesium. alpha-casein is the usual test substrate. In the absence of ATP, only oligopeptides shorter than five residues are hydrolyzed (such as succinyl-Leu-Tyr-|-NHMec, and Leu-Tyr-Leu-|-Tyr-Trp, in which cleavage of the -Tyr-|-Leu- and -Tyr-|-Trp bonds also occurs).. In terms of biological role, cleaves peptides in various proteins in a process that requires ATP hydrolysis. Has a chymotrypsin-like activity. Plays a major role in the degradation of misfolded proteins. In Blochmanniella floridana, this protein is ATP-dependent Clp protease proteolytic subunit.